The sequence spans 261 residues: Eukaryotic translation initiation factor 3 subunit G (261 aa).

Positions 156–180 (QDADSKNALGLRGDGRQMERNRSDE) are disordered. A compositionally biased stretch (basic and acidic residues) spans 168–180 (GDGRQMERNRSDE). The 79-residue stretch at 181-259 (NTCRVTNLPQ…MVLKVEWTRP (79 aa)) folds into the RRM domain.

Belongs to the eIF-3 subunit G family. Component of the eukaryotic translation initiation factor 3 (eIF-3) complex.

It localises to the cytoplasm. Functionally, RNA-binding component of the eukaryotic translation initiation factor 3 (eIF-3) complex, which is involved in protein synthesis of a specialized repertoire of mRNAs and, together with other initiation factors, stimulates binding of mRNA and methionyl-tRNAi to the 40S ribosome. The eIF-3 complex specifically targets and initiates translation of a subset of mRNAs involved in cell proliferation. This subunit can bind 18S rRNA. This Caenorhabditis briggsae protein is Eukaryotic translation initiation factor 3 subunit G.